The chain runs to 341 residues: UDP-glucose 4-epimerase (341 aa).

Belongs to the polysaccharide synthase family.

It carries out the reaction UDP-alpha-D-glucose = UDP-alpha-D-galactose. Functionally, epimerizes UDP-galactose to UDP-glucose. The protein is UDP-glucose 4-epimerase (capD) of Rickettsia akari (strain Hartford).